Consider the following 1087-residue polypeptide: 2'-5'-oligoadenylate synthase 3 (1087 aa).

M1 carries the N-acetylmethionine modification. The interval 6–343 (TPAAALDRFV…GDPVQSWKGP (338 aa)) is OAS domain 1. Interaction with dsRNA stretches follow at residues 12–57 (DRFV…VLKT) and 186–200 (ELRR…AKLK). A linker region spans residues 344-410 (GLPRAGCSGL…VPGMALDLSQ (67 aa)). Phosphothreonine is present on T365. OAS domain stretches follow at residues 411–742 (IPTK…PWDV) and 750–1084 (TPAG…WPVK). S804 is an ATP binding site. Mg(2+) contacts are provided by D816, D818, and D888. The ATP site is built by R947, K950, and Q969.

It belongs to the 2-5A synthase family. As to quaternary structure, monomer. Requires Mg(2+) as cofactor. Present at high level in placenta trophoblast.

Its subcellular location is the cytoplasm. It is found in the nucleus. It carries out the reaction 3 ATP = 5'-triphosphoadenylyl-(2'-&gt;5')-adenylyl-(2'-&gt;5')-adenosine + 2 diphosphate. Produced as a latent enzyme which is activated by dsRNA generated during the course of viral infection. Strongly activated by long dsRNAs at least 50 nucleotides in length. ssRNA does not activate the enzyme. Its function is as follows. Interferon-induced, dsRNA-activated antiviral enzyme which plays a critical role in cellular innate antiviral response. In addition, it may also play a role in other cellular processes such as apoptosis, cell growth, differentiation and gene regulation. Synthesizes preferentially dimers of 2'-5'-oligoadenylates (2-5A) from ATP which then bind to the inactive monomeric form of ribonuclease L (RNase L) leading to its dimerization and subsequent activation. Activation of RNase L leads to degradation of cellular as well as viral RNA, resulting in the inhibition of protein synthesis, thus terminating viral replication. Can mediate the antiviral effect via the classical RNase L-dependent pathway or an alternative antiviral pathway independent of RNase L. Displays antiviral activity against Chikungunya virus (CHIKV), Dengue virus, Sindbis virus (SINV) and Semliki forest virus (SFV). The protein is 2'-5'-oligoadenylate synthase 3 (OAS3) of Homo sapiens (Human).